The chain runs to 118 residues: MSCQQSQQQCQPPPKCTPKCPPKCPTPKCPPKCPPKCPPVSSCCSVSSGGCCGSSSGGSCGSSSGGCCSSGGGGCCLSHHRRRRSHCHRPQSSGCCSQPSGGSSCCGGGSGQHSGGCC.

Positions 1 to 10 (MSCQQSQQQC) are enriched in low complexity. Disordered stretches follow at residues 1–23 (MSCQQSQQQCQPPPKCTPKCPPK) and 87–118 (CHRPQSSGCCSQPSGGSSCCGGGSGQHSGGCC). The segment covering 11–23 (QPPPKCTPKCPPK) has biased composition (pro residues). Low complexity predominate over residues 90 to 103 (PQSSGCCSQPSGGS). The span at 104-118 (SCCGGGSGQHSGGCC) shows a compositional bias: gly residues.

It belongs to the LCE family. As to quaternary structure, interacts with CYSRT1. In terms of tissue distribution, skin-specific. Expression was readily detected in adult trunk skin, adult arm skin, fetal skin, penal skin, vulva, esophagus and tongue. Not expressed in the cervix, rectum, lung, colon, or placenta.

Its function is as follows. Precursors of the cornified envelope of the stratum corneum. This is Late cornified envelope protein 1C (LCE1C) from Homo sapiens (Human).